We begin with the raw amino-acid sequence, 429 residues long: MEIVCEDFQKALTKIKLLRENANIIEETVQRSVREIVQNVRESRDEALSFYTKKFDGVEIKDVRVSEEEIKQASMFVESSFLEALQEAKKNIISYHEKQKRQSMFDCTSKGIIRGQIIRPLENIGVYVPGGTASYPSSVLMNVLPAKLAGVKKIVMVTPPRAGGIDPHILVAASLAGVDEIYMIGGAQAIAALAYGTESIPKVDKIVGPGNLYVALAKREVYGIVNIDMIAGPSEIVVIADETGNAKYIAADLLSQAEHDERATAICITTNIELAKEVEKEIERQLETLPRSEIARESINRNGAIFIVPSIDEALQLSNEIAPEHLELHIKEPMNALAYVKHAGSIFLGPYAPEPLGDYLAGPNHVLPTSGTARFFSPLSVDDFVKKSSFLSYTEGALRDVKHHIVELANKEGLHAHARAIQIRFGEEE.

3 residues coordinate NAD(+): Y127, Q188, and N211. Residues S234, Q256, and H259 each coordinate substrate. Zn(2+) contacts are provided by Q256 and H259. Active-site proton acceptor residues include E324 and H325. H325, D358, E412, and H417 together coordinate substrate. D358 is a binding site for Zn(2+). H417 serves as a coordination point for Zn(2+).

It belongs to the histidinol dehydrogenase family. Requires Zn(2+) as cofactor.

The enzyme catalyses L-histidinol + 2 NAD(+) + H2O = L-histidine + 2 NADH + 3 H(+). The protein operates within amino-acid biosynthesis; L-histidine biosynthesis; L-histidine from 5-phospho-alpha-D-ribose 1-diphosphate: step 9/9. In terms of biological role, catalyzes the sequential NAD-dependent oxidations of L-histidinol to L-histidinaldehyde and then to L-histidine. The sequence is that of Histidinol dehydrogenase from Bacillus anthracis.